A 339-amino-acid chain; its full sequence is Ketol-acid reductoisomerase (NADP(+)) (339 aa).

One can recognise a KARI N-terminal Rossmann domain in the interval 1-182 (MRVYYDRDAD…GGGRAGVIET (182 aa)). NADP(+) contacts are provided by residues 24–27 (YGSQ), Arg-48, Ser-51, Thr-53, and 83–86 (DELQ). Residue His-108 is part of the active site. Residue Gly-134 participates in NADP(+) binding. The region spanning 183–328 (TFKEECETDL…KKLRSMMPWI (146 aa)) is the KARI C-terminal knotted domain. Asp-191, Glu-195, Glu-227, and Glu-231 together coordinate Mg(2+). Residue Ser-252 coordinates substrate.

This sequence belongs to the ketol-acid reductoisomerase family. It depends on Mg(2+) as a cofactor.

The enzyme catalyses (2R)-2,3-dihydroxy-3-methylbutanoate + NADP(+) = (2S)-2-acetolactate + NADPH + H(+). It carries out the reaction (2R,3R)-2,3-dihydroxy-3-methylpentanoate + NADP(+) = (S)-2-ethyl-2-hydroxy-3-oxobutanoate + NADPH + H(+). The protein operates within amino-acid biosynthesis; L-isoleucine biosynthesis; L-isoleucine from 2-oxobutanoate: step 2/4. Its pathway is amino-acid biosynthesis; L-valine biosynthesis; L-valine from pyruvate: step 2/4. Functionally, involved in the biosynthesis of branched-chain amino acids (BCAA). Catalyzes an alkyl-migration followed by a ketol-acid reduction of (S)-2-acetolactate (S2AL) to yield (R)-2,3-dihydroxy-isovalerate. In the isomerase reaction, S2AL is rearranged via a Mg-dependent methyl migration to produce 3-hydroxy-3-methyl-2-ketobutyrate (HMKB). In the reductase reaction, this 2-ketoacid undergoes a metal-dependent reduction by NADPH to yield (R)-2,3-dihydroxy-isovalerate. In Bartonella tribocorum (strain CIP 105476 / IBS 506), this protein is Ketol-acid reductoisomerase (NADP(+)).